We begin with the raw amino-acid sequence, 434 residues long: Probable transcription factor HMS1 (434 aa).

Residues 266-341 (TGRVSHNIIE…TKSIEYICHL (76 aa)) form the bHLH domain. Residues 365–434 (HLTEPSQPLS…DMDFNNAGDF (70 aa)) are disordered. Composition is skewed to polar residues over residues 368–382 (EPSQPLSDNSSSEQV) and 402–423 (PLHNIQYNIPHQNGLMSGTNNS).

In terms of assembly, interacts with the G1/S-specific cyclin PCL1. Post-translationally, phosphorylated by the cyclin-CDK complex PCL1-PHO85.

It is found in the nucleus. In terms of biological role, involved in exit from mitosis and pseudohyphal differentiation. The sequence is that of Probable transcription factor HMS1 (HMS1) from Saccharomyces cerevisiae (strain ATCC 204508 / S288c) (Baker's yeast).